A 754-amino-acid polypeptide reads, in one-letter code: Pentatricopeptide repeat-containing protein At3g53700, chloroplastic (754 aa).

The transit peptide at 1–72 (MAFSSCLKFY…DSAALRLFNL (72 aa)) directs the protein to the chloroplast. PPR repeat units lie at residues 82 to 116 (EPAL…RCEM), 117 to 152 (GTST…GLKP), 153 to 187 (DTHF…GIKP), 188 to 222 (DVST…GLVP), 223 to 257 (DEKT…GCSW), 258 to 288 (SNVS…MSNQ), 294 to 328 (DQYT…GYDP), 329 to 363 (DVYT…DCSP), 364 to 398 (NTVT…GILP), 399 to 433 (DVCT…GCEP), 434 to 468 (DEFT…GCAR), 469 to 503 (SVIT…GVSR), 504 to 538 (NSVT…GQKP), 539 to 573 (DKYT…GCEP), 574 to 608 (DIVT…GINL), 609 to 643 (TPHA…NEAP), and 645 to 680 (DAVS…GFVP).

This sequence belongs to the PPR family. P subfamily.

The protein localises to the plastid. The protein resides in the chloroplast. May be involved in female gametophyte development. This Arabidopsis thaliana (Mouse-ear cress) protein is Pentatricopeptide repeat-containing protein At3g53700, chloroplastic (MEE40).